Consider the following 141-residue polypeptide: HTH-type transcriptional repressor NsrR (141 aa).

One can recognise an HTH rrf2-type domain in the interval 2 to 129; it reads QLTNFTDFGL…DKHTIQDMLT (128 aa). The segment at residues 28–51 is a DNA-binding region (H-T-H motif); the sequence is ITVVTETFDVSRNHMVKIINKLGQ. Cys91, Cys96, and Cys102 together coordinate [2Fe-2S] cluster.

It depends on [2Fe-2S] cluster as a cofactor.

In terms of biological role, nitric oxide-sensitive repressor of genes involved in protecting the cell against nitrosative stress. May require iron for activity. This Aliivibrio fischeri (strain ATCC 700601 / ES114) (Vibrio fischeri) protein is HTH-type transcriptional repressor NsrR.